The primary structure comprises 241 residues: MASNPPSAASPRRTAVSPGADRPDGPDPAGQRQSYHAGRLEPEQLATTWVEQFARWFADASTAGAGVPEANAAVFATASADGRPSARTVLLKGFDHRGFVIYTNYTSRKGRESAENPFGSLVFPWYTLERQVVAIGAVERVSRTETEQYFASRPRGSQLGAWASHQSQIIESRDVLDARAAELAARWPAGTPVPTPPFWGGLRLVPDTVEFWQGRTNRLHDRLRYRRVCTADRWAVERLSP.

A disordered region spans residues 1–35 (MASNPPSAASPRRTAVSPGADRPDGPDPAGQRQSY). Substrate contacts are provided by residues 32 to 35 (RQSY) and K92. FMN-binding positions include 87-92 (RTVLLK), 102-103 (YT), R108, K109, and Q131. Residues Y149, R153, and S157 each contribute to the substrate site. Residues 166 to 167 (QS) and W212 contribute to the FMN site. Residue 218–220 (RLH) participates in substrate binding. R222 provides a ligand contact to FMN.

The protein belongs to the pyridoxamine 5'-phosphate oxidase family. As to quaternary structure, homodimer. It depends on FMN as a cofactor.

It carries out the reaction pyridoxamine 5'-phosphate + O2 + H2O = pyridoxal 5'-phosphate + H2O2 + NH4(+). It catalyses the reaction pyridoxine 5'-phosphate + O2 = pyridoxal 5'-phosphate + H2O2. The protein operates within cofactor metabolism; pyridoxal 5'-phosphate salvage; pyridoxal 5'-phosphate from pyridoxamine 5'-phosphate: step 1/1. It functions in the pathway cofactor metabolism; pyridoxal 5'-phosphate salvage; pyridoxal 5'-phosphate from pyridoxine 5'-phosphate: step 1/1. In terms of biological role, catalyzes the oxidation of either pyridoxine 5'-phosphate (PNP) or pyridoxamine 5'-phosphate (PMP) into pyridoxal 5'-phosphate (PLP). This is Pyridoxine/pyridoxamine 5'-phosphate oxidase from Frankia alni (strain DSM 45986 / CECT 9034 / ACN14a).